The chain runs to 458 residues: Argininosuccinate lyase (458 aa).

Belongs to the lyase 1 family. Argininosuccinate lyase subfamily.

It is found in the cytoplasm. The catalysed reaction is 2-(N(omega)-L-arginino)succinate = fumarate + L-arginine. The protein operates within amino-acid biosynthesis; L-arginine biosynthesis; L-arginine from L-ornithine and carbamoyl phosphate: step 3/3. This is Argininosuccinate lyase from Salmonella typhi.